The sequence spans 307 residues: MANITAAMVKDLREKTGAGMMDCKSALNETAGDIEAAVDWLRKKGLAKAAKKAGRVAAEGLVAVESAGRHAALVEVNSETDFVARNDGFQAFVREAAKVALNSQGNVESLEAAHFPGSQTTVKDRLQELIATIGENMTLRRVATLAVSQGVIATYVHGQVSEGLGKIGVLVALESAGNVEFLSTLGRQIAMHVAATNPLALDASGIDPATVERESAILREKNAGKPDHVLAKIVESGLKSYYKEVTLLDQPFVHDTSKTVSQVLKEAEGKAGGPVKLAAFVRYALGEGIEKEEGPDFASEVAAAVKG.

The segment at 80 to 83 is involved in Mg(2+) ion dislocation from EF-Tu; that stretch reads TDFV.

The protein belongs to the EF-Ts family.

It localises to the cytoplasm. Its function is as follows. Associates with the EF-Tu.GDP complex and induces the exchange of GDP to GTP. It remains bound to the aminoacyl-tRNA.EF-Tu.GTP complex up to the GTP hydrolysis stage on the ribosome. In Methylobacterium sp. (strain 4-46), this protein is Elongation factor Ts.